A 493-amino-acid polypeptide reads, in one-letter code: Cobyric acid synthase (493 aa).

The GATase cobBQ-type domain occupies 252-443 (DLQITVVRLP…LHGLFDNGPW (192 aa)). Cysteine 333 acts as the Nucleophile in catalysis. Residue histidine 435 is part of the active site.

The protein belongs to the CobB/CobQ family. CobQ subfamily.

It participates in cofactor biosynthesis; adenosylcobalamin biosynthesis. Its function is as follows. Catalyzes amidations at positions B, D, E, and G on adenosylcobyrinic A,C-diamide. NH(2) groups are provided by glutamine, and one molecule of ATP is hydrogenolyzed for each amidation. The chain is Cobyric acid synthase from Nostoc sp. (strain PCC 7120 / SAG 25.82 / UTEX 2576).